The sequence spans 207 residues: Holliday junction branch migration complex subunit RuvA (207 aa).

Residues 1–64 (MIGLISGQVQ…EDAQLLYGFI (64 aa)) are domain I. Residues 65–143 (DRKERDVFRQ…NIEVDNSNLE (79 aa)) form a domain II region. A flexible linker region spans residues 144–152 (FAIQPAPIS). The segment at 153–207 (AEDSIIAEVEGALMSLGYKEKEAQQAIKAAKSNGETFADTQSLLKATLQQFQSFK) is domain III.

It belongs to the RuvA family. In terms of assembly, homotetramer. Forms an RuvA(8)-RuvB(12)-Holliday junction (HJ) complex. HJ DNA is sandwiched between 2 RuvA tetramers; dsDNA enters through RuvA and exits via RuvB. An RuvB hexamer assembles on each DNA strand where it exits the tetramer. Each RuvB hexamer is contacted by two RuvA subunits (via domain III) on 2 adjacent RuvB subunits; this complex drives branch migration. In the full resolvosome a probable DNA-RuvA(4)-RuvB(12)-RuvC(2) complex forms which resolves the HJ.

It is found in the cytoplasm. In terms of biological role, the RuvA-RuvB-RuvC complex processes Holliday junction (HJ) DNA during genetic recombination and DNA repair, while the RuvA-RuvB complex plays an important role in the rescue of blocked DNA replication forks via replication fork reversal (RFR). RuvA specifically binds to HJ cruciform DNA, conferring on it an open structure. The RuvB hexamer acts as an ATP-dependent pump, pulling dsDNA into and through the RuvAB complex. HJ branch migration allows RuvC to scan DNA until it finds its consensus sequence, where it cleaves and resolves the cruciform DNA. This Psychrobacter arcticus (strain DSM 17307 / VKM B-2377 / 273-4) protein is Holliday junction branch migration complex subunit RuvA.